The sequence spans 201 residues: Acyl-homoserine-lactone synthase (201 aa).

The protein belongs to the autoinducer synthase family.

The catalysed reaction is a fatty acyl-[ACP] + S-adenosyl-L-methionine = an N-acyl-L-homoserine lactone + S-methyl-5'-thioadenosine + holo-[ACP] + H(+). Required for the synthesis of PAI consisting of 3-oxo-N-(tetrahydro-2-oxo-3-furanyl)-dodecanamide also known as N-(3-oxododecanoyl)homoserine lactone, an autoinducer molecule which binds to LasR and thus acts in elastase biosynthesis regulation. In Pseudomonas aeruginosa (strain ATCC 15692 / DSM 22644 / CIP 104116 / JCM 14847 / LMG 12228 / 1C / PRS 101 / PAO1), this protein is Acyl-homoserine-lactone synthase (lasI).